A 310-amino-acid polypeptide reads, in one-letter code: D-alanine--D-alanine ligase (310 aa).

The 196-residue stretch at 107-302 folds into the ATP-grasp domain; it reads KQAFQAARLT…FEDLVERILA (196 aa). Residue 135-188 coordinates ATP; sequence EFSLPVVVKPSQEGSSVGVSIVKKESEFAAAMKEAFRYDREILVEQFIKGSEVQ. Residues aspartate 256, glutamate 269, and asparagine 271 each contribute to the Mg(2+) site.

This sequence belongs to the D-alanine--D-alanine ligase family. The cofactor is Mg(2+). Mn(2+) serves as cofactor.

The protein localises to the cytoplasm. The enzyme catalyses 2 D-alanine + ATP = D-alanyl-D-alanine + ADP + phosphate + H(+). It functions in the pathway cell wall biogenesis; peptidoglycan biosynthesis. Its function is as follows. Cell wall formation. The protein is D-alanine--D-alanine ligase of Geotalea uraniireducens (strain Rf4) (Geobacter uraniireducens).